The chain runs to 373 residues: Mannitol-1-phosphate 5-dehydrogenase (373 aa).

Position 3-14 (3-14 (ALHFGAGNIGRG)) interacts with NAD(+).

This sequence belongs to the mannitol dehydrogenase family.

The catalysed reaction is D-mannitol 1-phosphate + NAD(+) = beta-D-fructose 6-phosphate + NADH + H(+). The sequence is that of Mannitol-1-phosphate 5-dehydrogenase from Bacillus pumilus (strain SAFR-032).